Here is an 899-residue protein sequence, read N- to C-terminus: MFVRSSWLLLWGTIVWASAEPVTLHIGGTFPMESGSGGWAGGEACLPAVEMALKDVNSRLDILPGYVLNMTNHNSQCQPGLAMQQLYDFLYKPPTKLMLLTGCSPVTTVIAEAAPVWKLVVLSYGGSSPALSNRNRFPTLFRTHPSANMQNPTRIHIMEKFKWKRFTILMSVEEVFVTTAKDLEAIARKKGIKVDRQSFYGDPTDAMKTLQRQDARIIVGLFYVTEARKVLCQAYHHGLYGRRYVWFFIGWYADTWYIPPPEEHLNCTAEQMTEAAEYHFTTESVMLSRDNIPAISEMTGMQFQQRLTQYFQKDTANVGGFPEAPLAYDAVWALALAFNCTRNNLPSHIRLENFTYDNKVIADTLFQCVKNTSFRGVSGKVMFSDSGDRIARTQIEQMQGGKYKIMGYYDTTSGDLEWYNKEQWLNGKGPPPDSTVIKKHAMTVSNEFYYPTILFAVLGIAACVFIYLFTQKHHERLIIFQSQPECNNILLIGCSLCLFSLFLIGLPSDDISISESLFPLLCHARVTILLFGFTFAYGSMFAKVWIVHRMGATENQQLASRQKDEEENTPWEGIRTLISTMVGRQALMRKSSGQAYGALLEKRNTVLNQPISSSKFYVIVAALTAVDVFVCFVWVLIDPLHLTEQKFPLFTPADSEEDEMIMPVLQQCQSNQQEVWIGIIMGFKCLLLVFGTFLSYETRNLKLRFINDSRFVGLAIYNVAVMTLVTAPVVTLLIHGKVDANFAFISLTVLICTYISVGLIYGPKIRHIIKVPPSADEIQLNGNVGPGVMSKVDQKRYDMLKKENETLQIQIEEKERKIHECKERLEELTKNSETEDMNAQLLCENDKQIADENLTYSTATTLTTTIPLIDLQNGNHPGQIYENDNDDDGSSTSSDEILL.

Positions 1–19 are cleaved as a signal peptide; it reads MFVRSSWLLLWGTIVWASA. Topologically, residues 20 to 447 are extracellular; it reads EPVTLHIGGT…KKHAMTVSNE (428 aa). N-linked (GlcNAc...) asparagine glycosylation is found at asparagine 69, asparagine 266, asparagine 339, asparagine 353, and asparagine 371. A helical transmembrane segment spans residues 448–468; it reads FYYPTILFAVLGIAACVFIYL. Topologically, residues 469–487 are cytoplasmic; sequence FTQKHHERLIIFQSQPECN. The helical transmembrane segment at 488–508 threads the bilayer; it reads NILLIGCSLCLFSLFLIGLPS. Over 509 to 525 the chain is Extracellular; that stretch reads DDISISESLFPLLCHAR. Residues 526 to 546 traverse the membrane as a helical segment; it reads VTILLFGFTFAYGSMFAKVWI. The Cytoplasmic portion of the chain corresponds to 547–616; the sequence is VHRMGATENQ…LNQPISSSKF (70 aa). A helical membrane pass occupies residues 617–637; it reads YVIVAALTAVDVFVCFVWVLI. Residues 638–674 are Extracellular-facing; it reads DPLHLTEQKFPLFTPADSEEDEMIMPVLQQCQSNQQE. The helical transmembrane segment at 675–695 threads the bilayer; sequence VWIGIIMGFKCLLLVFGTFLS. At 696 to 713 the chain is on the cytoplasmic side; the sequence is YETRNLKLRFINDSRFVG. Residues 714 to 734 traverse the membrane as a helical segment; that stretch reads LAIYNVAVMTLVTAPVVTLLI. The Extracellular segment spans residues 735–741; sequence HGKVDAN. A helical transmembrane segment spans residues 742–762; the sequence is FAFISLTVLICTYISVGLIYG. Over 763–899 the chain is Cytoplasmic; it reads PKIRHIIKVP…SSTSSDEILL (137 aa). Residues 791 to 842 are a coiled coil; the sequence is KVDQKRYDMLKKENETLQIQIEEKERKIHECKERLEELTKNSETEDMNAQLL. The tract at residues 870-899 is disordered; that stretch reads DLQNGNHPGQIYENDNDDDGSSTSSDEILL. The segment covering 890 to 899 has biased composition (low complexity); the sequence is SSTSSDEILL.

It belongs to the G-protein coupled receptor 3 family. As to quaternary structure, may form a heterodimer with gbb-2. In terms of tissue distribution, expressed in the nervous system, including cholinergic motor neurons, but not in GABAergic motor neurons or muscle.

The protein localises to the cell membrane. In terms of biological role, component of a heterodimeric G-protein coupled receptor for GABA, formed by gbb-1 and gbb-2. Within the heterodimeric GABA receptor, only gbb-1 seems to bind agonists, while gbb-2 mediates coupling to G proteins. Ligand binding causes a conformation change that triggers signaling via guanine nucleotide-binding proteins (G proteins) and modulates the activity of down-stream effectors, such as adenylate cyclase. Signaling inhibits adenylate cyclase, stimulates phospholipase A2, activates potassium channels, inactivates voltage-dependent calcium-channels and modulates inositol phospholipid hydrolysis. Calcium is required for high affinity binding to GABA. Plays a critical role in the fine-tuning of inhibitory synaptic transmission. Pre-synaptic GABA receptor inhibits neurotransmitter release by down-regulating high-voltage activated calcium channels, whereas postsynaptic GABA receptor decreases neuronal excitability by activating a prominent inwardly rectifying potassium (Kir) conductance that underlies the late inhibitory postsynaptic potentials. Along with gbb-2, may couple to the G(o)-alpha G-protein goa-1 to negatively regulate cholinergic receptor activity in the presence of high levels of acetylcholine in ventral cord motor neurons. As acetylcholine depolarizes body wall muscles, modulation of acetylcholine levels most likely results in the control of locomotory behavior. Acts in neurons to regulate lifespan, and this may be through G-protein-egl-8/PLC-beta signaling to the transcription factor daf-16/FOXO. This chain is Gamma-aminobutyric acid type B receptor subunit 1, found in Caenorhabditis elegans.